The primary structure comprises 339 residues: Ketol-acid reductoisomerase (NADP(+)) (339 aa).

In terms of domain architecture, KARI N-terminal Rossmann spans 1-182 (MRVYYDRDAD…GGGRSGIIET (182 aa)). Residues 24–27 (YGSQ), lysine 48, serine 51, threonine 53, and 83–86 (DELQ) contribute to the NADP(+) site. Residue histidine 108 is part of the active site. Glycine 134 serves as a coordination point for NADP(+). The region spanning 183-328 (TFQEECETDL…AKLRGMMPWI (146 aa)) is the KARI C-terminal knotted domain. Positions 191, 195, 227, and 231 each coordinate Mg(2+). Serine 252 contacts substrate.

The protein belongs to the ketol-acid reductoisomerase family. It depends on Mg(2+) as a cofactor.

The enzyme catalyses (2R)-2,3-dihydroxy-3-methylbutanoate + NADP(+) = (2S)-2-acetolactate + NADPH + H(+). It carries out the reaction (2R,3R)-2,3-dihydroxy-3-methylpentanoate + NADP(+) = (S)-2-ethyl-2-hydroxy-3-oxobutanoate + NADPH + H(+). The protein operates within amino-acid biosynthesis; L-isoleucine biosynthesis; L-isoleucine from 2-oxobutanoate: step 2/4. Its pathway is amino-acid biosynthesis; L-valine biosynthesis; L-valine from pyruvate: step 2/4. Functionally, involved in the biosynthesis of branched-chain amino acids (BCAA). Catalyzes an alkyl-migration followed by a ketol-acid reduction of (S)-2-acetolactate (S2AL) to yield (R)-2,3-dihydroxy-isovalerate. In the isomerase reaction, S2AL is rearranged via a Mg-dependent methyl migration to produce 3-hydroxy-3-methyl-2-ketobutyrate (HMKB). In the reductase reaction, this 2-ketoacid undergoes a metal-dependent reduction by NADPH to yield (R)-2,3-dihydroxy-isovalerate. This is Ketol-acid reductoisomerase (NADP(+)) from Allorhizobium ampelinum (strain ATCC BAA-846 / DSM 112012 / S4) (Agrobacterium vitis (strain S4)).